We begin with the raw amino-acid sequence, 354 residues long: Protein RecA (354 aa).

ATP is bound at residue 65-72 (GPESSGKT).

Belongs to the RecA family.

It localises to the cytoplasm. Its function is as follows. Can catalyze the hydrolysis of ATP in the presence of single-stranded DNA, the ATP-dependent uptake of single-stranded DNA by duplex DNA, and the ATP-dependent hybridization of homologous single-stranded DNAs. It interacts with LexA causing its activation and leading to its autocatalytic cleavage. The chain is Protein RecA from Aeromonas hydrophila subsp. hydrophila (strain ATCC 7966 / DSM 30187 / BCRC 13018 / CCUG 14551 / JCM 1027 / KCTC 2358 / NCIMB 9240 / NCTC 8049).